The sequence spans 349 residues: Holliday junction branch migration complex subunit RuvB (349 aa).

The segment covering 1–15 has biased composition (basic and acidic residues); that stretch reads MSDDYRETDPTRQPE. The segment at 1 to 25 is disordered; sequence MSDDYRETDPTRQPEDMGEGSLRPE. Residues 1-183 are large ATPase domain (RuvB-L); sequence MSDDYRETDP…FGIPLRLVFY (183 aa). Residues Leu22, Arg23, Gly64, Lys67, Thr68, Thr69, 130 to 132, Arg173, Tyr183, and Arg220 contribute to the ATP site; that span reads EDF. Thr68 is a binding site for Mg(2+). A small ATPAse domain (RuvB-S) region spans residues 184–254; that stretch reads TPEELRAIVS…LADAALGRLE (71 aa). The interval 257 to 349 is head domain (RuvB-H); the sequence is ERGLDAMDRR…SSLEQDDSAP (93 aa). Residues Arg293, Arg312, and Arg317 each coordinate DNA.

It belongs to the RuvB family. In terms of assembly, homohexamer. Forms an RuvA(8)-RuvB(12)-Holliday junction (HJ) complex. HJ DNA is sandwiched between 2 RuvA tetramers; dsDNA enters through RuvA and exits via RuvB. An RuvB hexamer assembles on each DNA strand where it exits the tetramer. Each RuvB hexamer is contacted by two RuvA subunits (via domain III) on 2 adjacent RuvB subunits; this complex drives branch migration. In the full resolvosome a probable DNA-RuvA(4)-RuvB(12)-RuvC(2) complex forms which resolves the HJ.

It is found in the cytoplasm. The enzyme catalyses ATP + H2O = ADP + phosphate + H(+). Functionally, the RuvA-RuvB-RuvC complex processes Holliday junction (HJ) DNA during genetic recombination and DNA repair, while the RuvA-RuvB complex plays an important role in the rescue of blocked DNA replication forks via replication fork reversal (RFR). RuvA specifically binds to HJ cruciform DNA, conferring on it an open structure. The RuvB hexamer acts as an ATP-dependent pump, pulling dsDNA into and through the RuvAB complex. RuvB forms 2 homohexamers on either side of HJ DNA bound by 1 or 2 RuvA tetramers; 4 subunits per hexamer contact DNA at a time. Coordinated motions by a converter formed by DNA-disengaged RuvB subunits stimulates ATP hydrolysis and nucleotide exchange. Immobilization of the converter enables RuvB to convert the ATP-contained energy into a lever motion, pulling 2 nucleotides of DNA out of the RuvA tetramer per ATP hydrolyzed, thus driving DNA branch migration. The RuvB motors rotate together with the DNA substrate, which together with the progressing nucleotide cycle form the mechanistic basis for DNA recombination by continuous HJ branch migration. Branch migration allows RuvC to scan DNA until it finds its consensus sequence, where it cleaves and resolves cruciform DNA. This Gluconobacter oxydans (strain 621H) (Gluconobacter suboxydans) protein is Holliday junction branch migration complex subunit RuvB.